The primary structure comprises 177 residues: MALKRSYYASKDDYSTKRILEIIERPLKKLTIEDTSEYDDSDIEMPTCKRVAYYKNEYTIVVEDLDAELEEDDSINKPTEEADEAPRTQLSVISPLEKKLKRDFLFLLLNSNRQPGKSSGKSSIPSPDDFKLSVKYSSSSEDLGAVTIESHLNVSSDASIKYKSSGTSQSDLLMEIG.

A disordered region spans residues 71–90; sequence EDDSINKPTEEADEAPRTQL. A compositionally biased stretch (basic and acidic residues) spans 74–86; that stretch reads SINKPTEEADEAP.

The protein resides in the nucleus. Functionally, involved in meiotic chromosome segregation. The sequence is that of Meiotic chromosome segregation protein C17A2.07c from Schizosaccharomyces pombe (strain 972 / ATCC 24843) (Fission yeast).